Here is a 204-residue protein sequence, read N- to C-terminus: RNA-free ribonuclease P (204 aa).

The protein belongs to the HARP family.

It catalyses the reaction Endonucleolytic cleavage of RNA, removing 5'-extranucleotides from tRNA precursor.. Its function is as follows. RNA-free RNase P that catalyzes the removal of the 5'-leader sequence from pre-tRNA to produce the mature 5'-terminus. This is RNA-free ribonuclease P from Ignicoccus hospitalis (strain KIN4/I / DSM 18386 / JCM 14125).